The following is a 526-amino-acid chain: Peptide chain release factor 3 (526 aa).

In terms of domain architecture, tr-type G spans 9–277 (ERRRTFAIIS…AFAEYAPPPQ (269 aa)). GTP contacts are provided by residues 18 to 25 (SHPDAGKT), 86 to 90 (DTPGH), and 140 to 143 (NKLD).

This sequence belongs to the TRAFAC class translation factor GTPase superfamily. Classic translation factor GTPase family. PrfC subfamily.

It is found in the cytoplasm. In terms of biological role, increases the formation of ribosomal termination complexes and stimulates activities of RF-1 and RF-2. It binds guanine nucleotides and has strong preference for UGA stop codons. It may interact directly with the ribosome. The stimulation of RF-1 and RF-2 is significantly reduced by GTP and GDP, but not by GMP. The protein is Peptide chain release factor 3 of Methylococcus capsulatus (strain ATCC 33009 / NCIMB 11132 / Bath).